Here is a 274-residue protein sequence, read N- to C-terminus: tRNA-cytidine(32) 2-sulfurtransferase (274 aa).

The PP-loop motif motif lies at 40–45; it reads SGGKDS. The [4Fe-4S] cluster site is built by Cys-115, Cys-118, and Cys-206.

The protein belongs to the TtcA family. Homodimer. It depends on Mg(2+) as a cofactor. The cofactor is [4Fe-4S] cluster.

It is found in the cytoplasm. It catalyses the reaction cytidine(32) in tRNA + S-sulfanyl-L-cysteinyl-[cysteine desulfurase] + AH2 + ATP = 2-thiocytidine(32) in tRNA + L-cysteinyl-[cysteine desulfurase] + A + AMP + diphosphate + H(+). It participates in tRNA modification. Functionally, catalyzes the ATP-dependent 2-thiolation of cytidine in position 32 of tRNA, to form 2-thiocytidine (s(2)C32). The sulfur atoms are provided by the cysteine/cysteine desulfurase (IscS) system. In Pseudomonas syringae pv. syringae (strain B728a), this protein is tRNA-cytidine(32) 2-sulfurtransferase.